Reading from the N-terminus, the 387-residue chain is Alkanesulfonate monooxygenase (387 aa).

The protein belongs to the SsuD family.

The catalysed reaction is an alkanesulfonate + FMNH2 + O2 = an aldehyde + FMN + sulfite + H2O + 2 H(+). In terms of biological role, catalyzes the desulfonation of aliphatic sulfonates. In Ralstonia pickettii (strain 12J), this protein is Alkanesulfonate monooxygenase.